The chain runs to 185 residues: Flavodoxin (185 aa).

Residues 4–159 enclose the Flavodoxin-like domain; the sequence is VLVIYDTRTG…ACRRLGRRLA (156 aa).

The protein belongs to the flavodoxin family. It depends on FMN as a cofactor.

Low-potential electron donor to a number of redox enzymes. The protein is Flavodoxin (fldA) of Aquifex aeolicus (strain VF5).